A 224-amino-acid polypeptide reads, in one-letter code: Homeobox protein Hox-B6 (224 aa).

The short motif at 127–132 is the Antp-type hexapeptide element; the sequence is VYPWMQ. The homeobox DNA-binding region spans 146 to 205; sequence GRRGRQTYTRYQTLELEKEFHYNRYLTRRRRIEIAHALCLTERQIKIWFQNRRMKWKKES. At Ser214 the chain carries Phosphoserine.

Belongs to the Antp homeobox family.

The protein localises to the nucleus. In terms of biological role, sequence-specific transcription factor which is part of a developmental regulatory system that provides cells with specific positional identities on the anterior-posterior axis. This Homo sapiens (Human) protein is Homeobox protein Hox-B6 (HOXB6).